The primary structure comprises 439 residues: Tol-Pal system protein TolB (439 aa).

A signal peptide spans 1–22 (MKKPLRWLAALTALLLPLSALA).

The protein belongs to the TolB family. In terms of assembly, the Tol-Pal system is composed of five core proteins: the inner membrane proteins TolA, TolQ and TolR, the periplasmic protein TolB and the outer membrane protein Pal. They form a network linking the inner and outer membranes and the peptidoglycan layer.

It is found in the periplasm. Part of the Tol-Pal system, which plays a role in outer membrane invagination during cell division and is important for maintaining outer membrane integrity. The protein is Tol-Pal system protein TolB of Xanthomonas axonopodis pv. citri (strain 306).